A 310-amino-acid polypeptide reads, in one-letter code: Olfactory receptor 8B8 (310 aa).

Topologically, residues 1–27 (MATENASVPEFILAGLTDQPGLRMPLF) are extracellular. Asn5 carries N-linked (GlcNAc...) asparagine glycosylation. The chain crosses the membrane as a helical span at residues 28–48 (FLFLGFYMVTMVGNLGLITLI). Topologically, residues 49 to 55 (GLNSHLH) are cytoplasmic. The helical transmembrane segment at 56-76 (TPMYFFLFNLSLIDFCYSTVI) threads the bilayer. The Extracellular segment spans residues 77–98 (TPKMLVSFVSKKNIISYSGCMT). An intrachain disulfide couples Cys96 to Cys188. A helical membrane pass occupies residues 99-119 (QLFFFLFFVVSESFILSAMAY). Over 120–140 (DRYVAICNPLMYTVTMSPQVC) the chain is Cytoplasmic. The helical transmembrane segment at 141–161 (LLLLLGVYVMGFAGAMAHTAF) threads the bilayer. The Extracellular portion of the chain corresponds to 162–195 (MVKLTFCADKLVNHYMCDILPLLERSCTSTYVNE). Residues 196–216 (LVVFIVVGIDIGVPTVTIFIS) traverse the membrane as a helical segment. Topologically, residues 217–238 (YALILSSILRISSTEGRSKAFS) are cytoplasmic. Residues 239–259 (TCSSHIIAVSLFFGSGAFMYL) form a helical membrane-spanning segment. At 260 to 270 (KPSSLLPMNQG) the chain is on the extracellular side. Residues 271 to 291 (KVSSLFYTIVVPMLNPLIYSL) form a helical membrane-spanning segment. Residues 292–310 (RNKDVKVALRKTLSRSSFS) are Cytoplasmic-facing.

It belongs to the G-protein coupled receptor 1 family.

The protein localises to the cell membrane. In terms of biological role, odorant receptor. The sequence is that of Olfactory receptor 8B8 from Mus musculus (Mouse).